A 484-amino-acid chain; its full sequence is PTS system MurNAc-GlcNAc-specific EIIBC component (484 aa).

A PTS EIIB type-1 domain is found at 5–87 (QQLAERIIAA…AELSGVKLGD (83 aa)). C27 acts as the Phosphocysteine intermediate; for EIIB activity in catalysis. Residues 130-484 (KSIANIFIPL…AMRQTDLLGD (355 aa)) form the PTS EIIC type-1 domain. 10 helical membrane-spanning segments follow: residues 135–155 (IFIPLIPAFIGAGLIGGIAAV), 160–180 (MVAGYISGAWITQLITVFNVI), 200–220 (FGATPGLGGVIGGTTLLTGIA), 234–254 (LQPGQGGIIGVIFAVWILSIV), 274–294 (IALLIVGLLTIFIFMPLAGFV), 305–325 (IISIGGVFSGFIIGASFLPLV), 349–369 (LLPIAAMAGAGQVGAALALWV), 384–404 (ALPVGFLGIGEPLIYGVTLPL), 408–428 (FLTACIGGGIGGAVIGGIGHI), and 450–470 (LGYIAGLLAAYAGGFVCTYLF).

It is found in the cell membrane. It catalyses the reaction N-acetyl-beta-D-muramate-(1-&gt;4)-N-acetyl-D-glucosamine(out) + N(pros)-phospho-L-histidyl-[protein] = 6-phospho-N-acetyl-beta-D-muramate-(1-&gt;4)-N-acetyl-D-glucosamine(in) + L-histidyl-[protein]. It functions in the pathway cell wall biogenesis; peptidoglycan recycling. The phosphoenolpyruvate-dependent sugar phosphotransferase system (sugar PTS), a major carbohydrate active transport system, catalyzes the phosphorylation of incoming sugar substrates concomitantly with their translocation across the cell membrane. This system is involved in the uptake and phosphorylation of MurNAc-GlcNAc, the principle peptidoglycan turnover product of S.aureus, yielding cytoplasmic MurNAc 6P-GlcNAc. The polypeptide is PTS system MurNAc-GlcNAc-specific EIIBC component (Staphylococcus aureus (strain Mu50 / ATCC 700699)).